We begin with the raw amino-acid sequence, 200 residues long: MLRALNRLAARPETRPPTPLLLPVRGRKTRHDPPAKSKVGRVQTPPAVDPAEFFVLTERYRQYRETVRALRLEFTLEVRRKLHEARAGVLAERKAQQAITEHRELMAWNRDENRRMQELRIARLQLEAQAQEVQKAEAQAQRAQEEQAWVQLKEQEVLKLQEEAKNFITRENLEARIEEALDSPKSYNWAVTKEGQVVRN.

The transit peptide at 1-27 (MLRALNRLAARPETRPPTPLLLPVRGR) directs the protein to the mitochondrion. Residues 1–44 (MLRALNRLAARPETRPPTPLLLPVRGRKTRHDPPAKSKVGRVQT) form a disordered region. An N6-acetyllysine modification is found at Lys-159.

It belongs to the mitochondrion-specific ribosomal protein mS26 family. Component of the mitochondrial ribosome small subunit (28S) which comprises a 12S rRNA and about 30 distinct proteins.

It is found in the mitochondrion. This chain is Small ribosomal subunit protein mS26 (Mrps26), found in Mus musculus (Mouse).